Here is a 488-residue protein sequence, read N- to C-terminus: Glutamyl-tRNA(Gln) amidotransferase subunit A (488 aa).

Residues Lys77 and Ser152 each act as charge relay system in the active site. Ser176 acts as the Acyl-ester intermediate in catalysis.

Belongs to the amidase family. GatA subfamily. Heterotrimer of A, B and C subunits.

It catalyses the reaction L-glutamyl-tRNA(Gln) + L-glutamine + ATP + H2O = L-glutaminyl-tRNA(Gln) + L-glutamate + ADP + phosphate + H(+). Its function is as follows. Allows the formation of correctly charged Gln-tRNA(Gln) through the transamidation of misacylated Glu-tRNA(Gln) in organisms which lack glutaminyl-tRNA synthetase. The reaction takes place in the presence of glutamine and ATP through an activated gamma-phospho-Glu-tRNA(Gln). The polypeptide is Glutamyl-tRNA(Gln) amidotransferase subunit A (Streptococcus thermophilus (strain CNRZ 1066)).